Here is a 301-residue protein sequence, read N- to C-terminus: Acetyl-coenzyme A carboxylase carboxyl transferase subunit beta (301 aa).

Residues 25–294 (LWIKDPSTGE…NSDAPAPQKP (270 aa)) form the CoA carboxyltransferase N-terminal domain.

It belongs to the AccD/PCCB family. In terms of assembly, acetyl-CoA carboxylase is a heterohexamer composed of biotin carboxyl carrier protein (AccB), biotin carboxylase (AccC) and two subunits each of ACCase subunit alpha (AccA) and ACCase subunit beta (AccD).

It is found in the cytoplasm. The catalysed reaction is N(6)-carboxybiotinyl-L-lysyl-[protein] + acetyl-CoA = N(6)-biotinyl-L-lysyl-[protein] + malonyl-CoA. It functions in the pathway lipid metabolism; malonyl-CoA biosynthesis; malonyl-CoA from acetyl-CoA: step 1/1. Functionally, component of the acetyl coenzyme A carboxylase (ACC) complex. Biotin carboxylase (BC) catalyzes the carboxylation of biotin on its carrier protein (BCCP) and then the CO(2) group is transferred by the transcarboxylase to acetyl-CoA to form malonyl-CoA. The chain is Acetyl-coenzyme A carboxylase carboxyl transferase subunit beta from Brucella canis (strain ATCC 23365 / NCTC 10854 / RM-666).